A 428-amino-acid polypeptide reads, in one-letter code: Elongation factor 1-alpha (428 aa).

The tr-type G domain maps to 5–215 (KPHVNIVFIG…ALDQIPEPPK (211 aa)). A G1 region spans residues 14–21 (GHVDHGKS). 14–21 (GHVDHGKS) contacts GTP. S21 lines the Mg(2+) pocket. Positions 68 to 72 (GITID) are G2. The G3 stretch occupies residues 89–92 (DAPG). Residues 89–93 (DAPGH) and 144–147 (NKMD) contribute to the GTP site. A G4 region spans residues 144–147 (NKMD). The interval 181–183 (SAW) is G5.

The protein belongs to the TRAFAC class translation factor GTPase superfamily. Classic translation factor GTPase family. EF-Tu/EF-1A subfamily.

It is found in the cytoplasm. The enzyme catalyses GTP + H2O = GDP + phosphate + H(+). Its function is as follows. GTP hydrolase that promotes the GTP-dependent binding of aminoacyl-tRNA to the A-site of ribosomes during protein biosynthesis. The protein is Elongation factor 1-alpha of Thermococcus onnurineus (strain NA1).